The primary structure comprises 532 residues: Cilia- and flagella-associated protein 97 (532 aa).

Residue Ser19 is modified to Phosphoserine. 5 disordered regions span residues 28–83, 116–263, 306–333, 398–421, and 485–532; these read ETNS…PVEN, IPNR…TPDI, KAAK…SLDH, LSRQ…PPKL, and GQYS…TAWL. Over residues 35–49 the composition is skewed to basic and acidic residues; it reads KQNDDPKERIDKDTK. Polar residues predominate over residues 50 to 63; the sequence is NVNSNTGMQTTENY. Positions 67-82 are enriched in basic and acidic residues; the sequence is KGNERNVKFPPEHPVE. The span at 127–139 shows a compositional bias: acidic residues; the sequence is GEDDYYTDGEESS. Position 133 is a phosphothreonine (Thr133). Residues Ser138 and Ser139 each carry the phosphoserine modification. Low complexity-rich tracts occupy residues 170-185 and 194-205; these read SSSS…SGSG and DSHLSDSSPSSK. Ser218 carries the phosphoserine modification. The span at 227–239 shows a compositional bias: polar residues; it reads IKSTETQPSSTTP. Ser248 carries the post-translational modification Phosphoserine. The segment covering 253–263 has biased composition (polar residues); the sequence is TDVSPLSTPDI. A compositionally biased stretch (low complexity) spans 320–329; that stretch reads SSKSSSVLDS. Ser330 carries the post-translational modification Phosphoserine. Residues 374 to 450 are a coiled coil; that stretch reads GKNYSFTREE…ALLKRLEAVK (77 aa). Residues 493–503 show a composition bias toward polar residues; that stretch reads SRTSSATSGLS.

The protein belongs to the CFAP97 family.

The polypeptide is Cilia- and flagella-associated protein 97 (Homo sapiens (Human)).